The sequence spans 535 residues: Intercellular adhesion molecule 1 (535 aa).

A signal peptide spans 1 to 27 (MALGAAPAAQLALLALLGTLLPGPGGA). The Extracellular portion of the chain corresponds to 28 to 480 (GISIHPSKAI…LNVLHGQNIL (453 aa)). Residues 41–102 (GDSLTVNCSN…SNCHKEQTIA (62 aa)) form the Ig-like C2-type 1 domain. The N-linked (GlcNAc...) asparagine glycan is linked to Asn47. Intrachain disulfides connect Cys48–Cys91 and Cys52–Cys95. 2 N-linked (GlcNAc...) asparagine glycosylation sites follow: Asn105 and Asn131. Positions 127-193 (GEELNLSCLV…FSCRWELDLR (67 aa)) constitute an Ig-like C2-type 2 domain. Cys134 and Cys186 are oxidised to a cystine. The Cell attachment site; atypical motif lies at 151–153 (RGE). 10 N-linked (GlcNAc...) asparagine glycosylation sites follow: Asn183, Asn202, Asn236, Asn262, Asn302, Asn341, Asn357, Asn366, Asn404, and Asn428. The Ig-like C2-type 3 domain maps to 230–295 (GSRWPVNCTL…LKCSVTLGEV (66 aa)). A disulfide bridge connects residues Cys237 and Cys288. Positions 323–376 (WTTVTVECVTRDGAVVKLNGTSAVPPGPRAQLKLNASASDHRSNFSCSAALEIA) constitute an Ig-like C2-type 4 domain. Disulfide bonds link Cys330–Cys369, Cys401–Cys417, Cys417–Cys456, and Cys429–Cys456. One can recognise an Ig-like C2-type 5 domain in the interval 410–463 (GSEQTLKCEAQGNPIPKLNCSRKGDGASLPIGDLRPVRREVAGTYLCRATSARG). Residues 481–503 (DIVIPVVAVTLILGALGTAGYVY) form a helical membrane-spanning segment. Residues 504-535 (NYQRKIQKYELQKARKAQEEAALKLNAQSTPP) lie on the Cytoplasmic side of the membrane. Thr533 is subject to Phosphothreonine.

The protein belongs to the immunoglobulin superfamily. ICAM family. As to quaternary structure, homodimer. Interacts with MUC1 and promotes cell aggregation in epithelial cells. Interacts with ARHGEF26/SGEF. Interacts (on T cell side) with CD81, CD247 and CD9 at immunological synapses between antigen-presenting cells and T cells. Post-translationally, monoubiquitinated, which is promoted by MARCH9 and leads to endocytosis.

It is found in the membrane. Its function is as follows. ICAM proteins are ligands for the leukocyte adhesion protein LFA-1 (integrin alpha-L/beta-2). During leukocyte trans-endothelial migration, ICAM1 engagement promotes the assembly of endothelial apical cups through ARHGEF26/SGEF and RHOG activation. The sequence is that of Intercellular adhesion molecule 1 (ICAM1) from Bos taurus (Bovine).